Reading from the N-terminus, the 210-residue chain is Large ribosomal subunit protein bL25 (210 aa).

A disordered region spans residues 185 to 210 (APEPAGQPEVPPEPAEEAKAKTIEKE). Basic and acidic residues predominate over residues 200-210 (EEAKAKTIEKE).

Belongs to the bacterial ribosomal protein bL25 family. CTC subfamily. In terms of assembly, part of the 50S ribosomal subunit; part of the 5S rRNA/L5/L18/L25 subcomplex. Contacts the 5S rRNA. Binds to the 5S rRNA independently of L5 and L18.

Functionally, this is one of the proteins that binds to the 5S RNA in the ribosome where it forms part of the central protuberance. This Desulforamulus reducens (strain ATCC BAA-1160 / DSM 100696 / MI-1) (Desulfotomaculum reducens) protein is Large ribosomal subunit protein bL25.